The sequence spans 375 residues: cAMP-dependent protein kinase regulatory subunit (375 aa).

The tract at residues R28–F142 is dimerization and phosphorylation. Residues R41–R50 show a composition bias toward basic and acidic residues. Residues R41–T102 form a disordered region. The segment covering G64–T82 has biased composition (polar residues). The segment covering S83–P97 has biased composition (low complexity). At S103 the chain carries Phosphoserine. Residues L143–E258, E208, R217, I261–K375, E328, and R337 each bind 3',5'-cyclic AMP.

Belongs to the cAMP-dependent kinase regulatory chain family. As to quaternary structure, tetramer, composed of 2 regulatory (R) and 2 catalytic (C) subunits. In the presence of cAMP it dissociates into 2 active monomeric C subunits and an R dimer.

This Yarrowia lipolytica (strain CLIB 122 / E 150) (Yeast) protein is cAMP-dependent protein kinase regulatory subunit (PKAR).